A 481-amino-acid chain; its full sequence is MAKITQTMMAQVLSLVGGSGNVAKCGNCMTRLRLTLNNSALADHAALKKISGVMGVVESDAQLQIILGPGKAQTAADMMNALIESGDNVAPAVSEADLSTIAAQQKKQMKSKQTSAVQRFLSKFATIFTPLIPGFIAAGLLLGIATLLEQIYVVGQTPSEFMLDLVAYLKVFGKGLFAFLSILIGYNAQQAFGGSGVNGAILASLFVLGYDPEATKGIYSGMSEFFGFAIDPRGNIIGVLLAAILGAQVERKVREYMPDDLDMILTSVVTLLIMGAVTFLIIMPIGGELFKGMSWLFLNLNDNPLGAAILAGLFLISVVFGIHQGFVPVYFALMEAQGFNSLFPILAMAGAGQVGASLALYARAKKETTIRTQIKGAIIPGILGIGEPLIYGVTLPRVKPFVTACIGGAAGGFFIGLISYLGLPVGLNTVFGPSGVVAIPLMTSADGIFAGMAVFVGGLLISYTVGFAATYFFGCKDVDLS.

One can recognise a PTS EIIB type-1 domain in the interval 1-89; it reads MAKITQTMMA…NALIESGDNV (89 aa). Catalysis depends on Cys-28, which acts as the Phosphocysteine intermediate; for EIIB activity. Residues 122-481 form the PTS EIIC type-1 domain; sequence SKFATIFTPL…FFGCKDVDLS (360 aa). 10 helical membrane passes run 124 to 144, 165 to 185, 190 to 210, 225 to 245, 263 to 283, 307 to 327, 342 to 362, 376 to 396, 406 to 426, and 448 to 468; these read FATIFTPLIPGFIAAGLLLGI, LVAYLKVFGKGLFAFLSILIG, QAFGGSGVNGAILASLFVLGY, FFGFAIDPRGNIIGVLLAAIL, MILTSVVTLLIMGAVTFLIIM, AAILAGLFLISVVFGIHQGFV, LFPILAMAGAGQVGASLALYA, GAIIPGILGIGEPLIYGVTLP, IGGAAGGFFIGLISYLGLPVG, and IFAGMAVFVGGLLISYTVGFA.

It is found in the cell inner membrane. It carries out the reaction N-acetyl-beta-D-muramate(out) + N(pros)-phospho-L-histidyl-[protein] = N-acetyl-beta-D-muramate 6-phosphate(in) + L-histidyl-[protein]. Its function is as follows. The phosphoenolpyruvate-dependent sugar phosphotransferase system (sugar PTS), a major carbohydrate active transport system, catalyzes the phosphorylation of incoming sugar substrates concomitantly with their translocation across the cell membrane. This system is involved in N-acetylmuramic acid (MurNAc) transport, yielding cytoplasmic MurNAc-6-P. Is also able to take up anhydro-N-acetylmuramic acid (anhMurNAc), but cannot phosphorylate the carbon 6, probably because of the 1,6-anhydro ring. This Vibrio cholerae serotype O1 (strain ATCC 39315 / El Tor Inaba N16961) protein is PTS system N-acetylmuramic acid-specific EIIBC component (murP).